A 131-amino-acid chain; its full sequence is UPF0102 protein YraN (131 aa).

Residues Met-1–Thr-19 show a composition bias toward polar residues. The tract at residues Met-1–Asp-21 is disordered.

The protein belongs to the UPF0102 family.

The chain is UPF0102 protein YraN from Escherichia coli O7:K1 (strain IAI39 / ExPEC).